Consider the following 519-residue polypeptide: MDAGLIILDGWGLNPDDDVRDAVAAADTPNFDRYRDAGAASTLTTHGRRVGLPEGQMGNSEVGHLNIGAGRVVKQDSARVSDSIARSRGEAPPDDDAQDPPFFENETILSAFEHAEAHGGRVHFMGLVSDGGVHSYQDHLHALIELAGERGTDAVSHAFTDGRDTSPTGGEDYLADLEAHVEEHGTGHVATVCGRYYAMDRDQNWERTRRAYDAIVHREGDHHADEAVTAATESYARDTTDEFIEPTTVGDHAGLEAGDAVVFFNFRSDRARQLTRMLGDIRPEDWGSDTEPPDTRLVTMTQYDETFDLPVAFPPNQPADVLGEVLSEAGKTQIRLAETEKYPHVTYFLNGGREVAFDGESREIVDSPDVATYDLQPEMSAPELADTAIEFIETEDPSAMVLNFANPDMVGHTGDFDAAVTAVEAVDEQLGRLVETIGAAGGHALICADHGNADDMGTEDDPHTAHTTNPVPFIYLSPDGTAGGRTARDGGTLADLAPTMLTLMGIDRPDAMTGTPLVE.

Mn(2+) is bound by residues D9 and S60. S60 serves as the catalytic Phosphoserine intermediate. A compositionally biased stretch (basic and acidic residues) spans 76–91; it reads DSARVSDSIARSRGEA. The segment at 76–102 is disordered; the sequence is DSARVSDSIARSRGEAPPDDDAQDPPF. Substrate contacts are provided by residues H134, 163–164, R195, R201, 267–270, and K341; these read RD and RSDR. Residues D408, H412, D449, H450, and H466 each coordinate Mn(2+).

The protein belongs to the BPG-independent phosphoglycerate mutase family. It depends on Mn(2+) as a cofactor.

The catalysed reaction is (2R)-2-phosphoglycerate = (2R)-3-phosphoglycerate. It participates in carbohydrate degradation; glycolysis; pyruvate from D-glyceraldehyde 3-phosphate: step 3/5. Its function is as follows. Catalyzes the interconversion of 2-phosphoglycerate and 3-phosphoglycerate. The sequence is that of 2,3-bisphosphoglycerate-independent phosphoglycerate mutase from Haloarcula marismortui (strain ATCC 43049 / DSM 3752 / JCM 8966 / VKM B-1809) (Halobacterium marismortui).